A 500-amino-acid chain; its full sequence is Na(+)/H(+) antiporter NhaB (500 aa).

The next 13 helical transmembrane spans lie at 11–31, 34–54, 58–78, 96–116, 129–149, 150–170, 205–225, 241–261, 311–331, 350–370, 394–414, 450–470, and 477–497; these read HGFL…FLVL, LLLV…EFIF, MALK…ALLL, VILL…LLLF, AILS…LDAL, TVTA…HRVA, LLMH…VGEP, FFFK…LTCV, ILII…LMVI, FQDA…VAVI, MLYL…VATI, ATPN…APLI, and MVWM…WAVT.

It belongs to the NhaB Na(+)/H(+) (TC 2.A.34) antiporter family.

It is found in the cell inner membrane. It carries out the reaction 2 Na(+)(in) + 3 H(+)(out) = 2 Na(+)(out) + 3 H(+)(in). Its function is as follows. Na(+)/H(+) antiporter that extrudes sodium in exchange for external protons. The sequence is that of Na(+)/H(+) antiporter NhaB from Pseudomonas putida (strain GB-1).